A 470-amino-acid chain; its full sequence is E3 SUMO-protein ligase EGR2 (470 aa).

Residues 126 to 141 show a composition bias toward low complexity; that stretch reads PPASTTASSSVTSASP. Disordered regions lie at residues 126 to 153, 159 to 178, and 184 to 211; these read PPASTTASSSVTSASPNPLATGPLGVCT, PELDHLYSPPPPPPPYSGCT, and DPSAFLSPPPTTSTSSLAYQPPPSYPSP. Lys247 carries the N6-acetyllysine; by EP300 modification. Residues 275-344 are disordered; it reads GPSAGVTGPG…RPYPCPAEGC (70 aa). Residues 281-291 are compositionally biased toward gly residues; the sequence is TGPGASGGGEG. 3 C2H2-type zinc fingers span residues 337 to 361, 367 to 389, and 395 to 417; these read YPCPAEGCDRRFSRSDELTRHIRIH, FQCRICMRNFSRSDHLTTHIRTH, and FACDYCGRKFARSDERKRHTKIH. A disordered region spans residues 408 to 470; the sequence is DERKRHTKIH…ASCTSRTRTP (63 aa). Residues 412-422 are compositionally biased toward basic residues; that stretch reads RHTKIHLRQKE. Positions 426-439 are enriched in low complexity; it reads SAPSSSASAQSSAS. A compositionally biased stretch (gly residues) spans 440–450; it reads GPGGSQAGGSL.

The protein belongs to the EGR C2H2-type zinc-finger protein family. As to quaternary structure, interacts with HCFC1. Interacts with WWP2. Interacts with UBC9. Interacts with CITED1. Interacts (via phosphorylated form) with SFN. Ubiquitinated by WWP2 leading to proteasomal degradation. In terms of processing, acetylated at Lys-247. May be deacetylated by HDAC6, HDAC10 or SIRT1.

It is found in the nucleus. It participates in protein modification; protein sumoylation. Its function is as follows. Sequence-specific DNA-binding transcription factor. Plays a role in hindbrain segmentation by regulating the expression of a subset of homeobox containing genes and in Schwann cell myelination by regulating the expression of genes involved in the formation and maintenance of myelin. Binds to two EGR2-consensus sites EGR2A (5'-CTGTAGGAG-3') and EGR2B (5'-ATGTAGGTG-3') in the HOXB3 enhancer and promotes HOXB3 transcriptional activation. Binds to specific DNA sites located in the promoter region of HOXA4, HOXB2 and ERBB2. Regulates hindbrain segmentation by controlling the expression of Hox genes, such as HOXA4, HOXB3 and HOXB2, and thereby specifying odd and even rhombomeres. Promotes the expression of HOXB3 in the rhombomere r5 in the hindbrain. Regulates myelination in the peripheral nervous system after birth, possibly by regulating the expression of myelin proteins, such as MPZ, and by promoting the differentiation of Schwann cells. Involved in the development of the jaw openener musculature, probably by playing a role in its innervation through trigeminal motor neurons. May play a role in adipogenesis, possibly by regulating the expression of CEBPB. In terms of biological role, E3 SUMO-protein ligase helping SUMO1 conjugation to its coregulators NAB1 and NAB2, whose sumoylation down-regulates EGR2 transcriptional activity. This chain is E3 SUMO-protein ligase EGR2 (Egr2), found in Rattus norvegicus (Rat).